Reading from the N-terminus, the 374-residue chain is Flagellar P-ring protein (374 aa).

The first 29 residues, 1 to 29 (MPGVGISRIVRIAVAALVALAPLMTPAHA), serve as a signal peptide directing secretion.

This sequence belongs to the FlgI family. In terms of assembly, the basal body constitutes a major portion of the flagellar organelle and consists of four rings (L,P,S, and M) mounted on a central rod.

Its subcellular location is the periplasm. The protein resides in the bacterial flagellum basal body. Its function is as follows. Assembles around the rod to form the L-ring and probably protects the motor/basal body from shearing forces during rotation. This is Flagellar P-ring protein from Nitrobacter hamburgensis (strain DSM 10229 / NCIMB 13809 / X14).